The following is a 245-amino-acid chain: NLP effector protein Pc118551 (245 aa).

The signal sequence occupies residues 1–19 (MNLRAFLLSAVAALVAVQA). A Hepta-peptide GHRHDWE motif motif is present at residues 121-127 (QRRHLWE). N-linked (GlcNAc...) asparagine glycosylation is present at Asn140.

It belongs to the Necrosis inducing protein (NPP1) family.

It localises to the secreted. In terms of biological role, secreted effector that contributes strongly to virulence during infection by P.capsici. This is NLP effector protein Pc118551 from Phytophthora capsici.